We begin with the raw amino-acid sequence, 843 residues long: Probable disease resistance protein At5g47250 (843 aa).

Residues 28-58 adopt a coiled-coil conformation; sequence MLKENLVLLKSAFDELKAEKEDVVNRVNAGE. The NB-ARC domain maps to 141–440; sequence TEQPPPPVVE…GEGFIDEKDG (300 aa). Residue 183-190 participates in ATP binding; it reads GMGGVGKT. 5 LRR repeats span residues 510 to 531, 535 to 556, 559 to 581, 583 to 604, and 606 to 628; these read TVTK…PEFP, NLVT…FFLV, TLVV…ISAL, SLRL…LGVL, and KLIH…SELQ.

This sequence belongs to the disease resistance NB-LRR family.

Functionally, probable disease resistance protein. The polypeptide is Probable disease resistance protein At5g47250 (Arabidopsis thaliana (Mouse-ear cress)).